The sequence spans 242 residues: Demethylmenaquinone methyltransferase (242 aa).

S-adenosyl-L-methionine-binding positions include Thr-62, Asp-83, and 112-113 (DV).

It belongs to the class I-like SAM-binding methyltransferase superfamily. MenG/UbiE family.

It carries out the reaction a 2-demethylmenaquinol + S-adenosyl-L-methionine = a menaquinol + S-adenosyl-L-homocysteine + H(+). It participates in quinol/quinone metabolism; menaquinone biosynthesis; menaquinol from 1,4-dihydroxy-2-naphthoate: step 2/2. Its function is as follows. Methyltransferase required for the conversion of demethylmenaquinol (DMKH2) to menaquinol (MKH2). This chain is Demethylmenaquinone methyltransferase, found in Protochlamydia amoebophila (strain UWE25).